Reading from the N-terminus, the 188-residue chain is Guanylate kinase (188 aa).

One can recognise a Guanylate kinase-like domain in the interval 8–188 (GRIVVLAGPS…AVAAISEILR (181 aa)). An ATP-binding site is contributed by 15–22 (GPSAVGKS).

This sequence belongs to the guanylate kinase family.

It localises to the cytoplasm. It carries out the reaction GMP + ATP = GDP + ADP. Functionally, essential for recycling GMP and indirectly, cGMP. In Corynebacterium jeikeium (strain K411), this protein is Guanylate kinase.